A 701-amino-acid chain; its full sequence is ABC transporter G family member 23 (701 aa).

The region spanning 7 to 237 is the ABC transporter domain; the sequence is INLNNVSRSY…YECSLLEDVY (231 aa). An ATP-binding site is contributed by 39–46; it reads GSSGSGKT. Transmembrane regions (helical) follow at residues 335–355, 493–513, 541–561, 574–596, 608–628, and 665–685; these read FPLV…FLAI, FLAP…FLSI, HILA…LIAV, LIYL…ISLI, LAIF…EAII, and LIII…STPI. The region spanning 459 to 686 is the ABC transmembrane type-2 domain; the sequence is FQKAFNKIAN…SLIVISTPIG (228 aa).

The protein belongs to the ABC transporter superfamily. ABCG family.

It localises to the membrane. The protein is ABC transporter G family member 23 (abcG23) of Dictyostelium discoideum (Social amoeba).